The sequence spans 419 residues: MDKFCVQGPTRLSGEVTISGAKNAALPILFAALLAEEPVEIQNVPKLKDIDTTMKLLGQLGARVERNGSVHVDASDVDVYCAPYELVKTMRASIWALGPLVARFGQGQVSLPGGCAIGARPVDLHISGLEQLGATIKLEEGYVKASVDGRLRGAHIVMDKVSVGATITIMSAATLATGTTIIENAAREPEIVDTANFLITLGAKISGAGTDKITIEGVERLGGGVYRVLPDRIETGTFLVAAAISRGRVVCHATRPDTLDAVLAKLREAGADIAVGDDWISLDMHGQRPKAVTVRTAPHPGFPTDMQAQFSLLNLVADGTGVITETIFENRFMHVPELIRMGAHAEIESNTVICHGVETLSGAQVMATDLRASASLVLAGCIAEGVTVVDRIYHIDRGYDCIEEKLRRMGANIERIRGE.

Lys22 to Asn23 contacts phosphoenolpyruvate. Arg91 provides a ligand contact to UDP-N-acetyl-alpha-D-glucosamine. Cys115 functions as the Proton donor in the catalytic mechanism. Cys115 carries the post-translational modification 2-(S-cysteinyl)pyruvic acid O-phosphothioketal. Residues Arg120–Leu124, Lys160–Val163, Asp305, and Ile327 each bind UDP-N-acetyl-alpha-D-glucosamine.

It belongs to the EPSP synthase family. MurA subfamily.

It localises to the cytoplasm. The enzyme catalyses phosphoenolpyruvate + UDP-N-acetyl-alpha-D-glucosamine = UDP-N-acetyl-3-O-(1-carboxyvinyl)-alpha-D-glucosamine + phosphate. The protein operates within cell wall biogenesis; peptidoglycan biosynthesis. Cell wall formation. Adds enolpyruvyl to UDP-N-acetylglucosamine. In Sodalis glossinidius (strain morsitans), this protein is UDP-N-acetylglucosamine 1-carboxyvinyltransferase.